The primary structure comprises 447 residues: 3-phosphoshikimate 1-carboxyvinyltransferase (447 aa).

Positions 25, 26, and 30 each coordinate 3-phosphoshikimate. Lys-25 is a phosphoenolpyruvate binding site. Phosphoenolpyruvate is bound by residues Gly-96 and Arg-124. 3-phosphoshikimate-binding residues include Ser-171, Ser-172, Gln-173, Ser-203, Asp-325, and Lys-352. Gln-173 lines the phosphoenolpyruvate pocket. Asp-325 acts as the Proton acceptor in catalysis. The phosphoenolpyruvate site is built by Arg-356, Arg-400, and Lys-425.

Belongs to the EPSP synthase family. As to quaternary structure, monomer.

The protein localises to the cytoplasm. The enzyme catalyses 3-phosphoshikimate + phosphoenolpyruvate = 5-O-(1-carboxyvinyl)-3-phosphoshikimate + phosphate. It participates in metabolic intermediate biosynthesis; chorismate biosynthesis; chorismate from D-erythrose 4-phosphate and phosphoenolpyruvate: step 6/7. Catalyzes the transfer of the enolpyruvyl moiety of phosphoenolpyruvate (PEP) to the 5-hydroxyl of shikimate-3-phosphate (S3P) to produce enolpyruvyl shikimate-3-phosphate and inorganic phosphate. The sequence is that of 3-phosphoshikimate 1-carboxyvinyltransferase from Bordetella petrii (strain ATCC BAA-461 / DSM 12804 / CCUG 43448).